We begin with the raw amino-acid sequence, 729 residues long: DNA topoisomerase 3 (729 aa).

The Toprim domain occupies 3–136 (KSVVIAEKPS…IKRLWISSVT (134 aa)). Residues E9 and D105 each contribute to the Mg(2+) site. The 442-residue stretch at 153-594 (YDNLYASAVA…EMKNYTKEIV (442 aa)) folds into the Topo IA-type catalytic domain. The interval 187–192 (NCGRVQ) is interaction with DNA. Y310 functions as the O-(5'-phospho-DNA)-tyrosine intermediate in the catalytic mechanism. The span at 686 to 713 (ERRKKESGNKADKRDVQKYMKQQKKEEE) shows a compositional bias: basic and acidic residues. Residues 686 to 718 (ERRKKESGNKADKRDVQKYMKQQKKEEEPLNNP) form a disordered region.

It belongs to the type IA topoisomerase family. The cofactor is Mg(2+).

The enzyme catalyses ATP-independent breakage of single-stranded DNA, followed by passage and rejoining.. In terms of biological role, releases the supercoiling and torsional tension of DNA, which is introduced during the DNA replication and transcription, by transiently cleaving and rejoining one strand of the DNA duplex. Introduces a single-strand break via transesterification at a target site in duplex DNA. The scissile phosphodiester is attacked by the catalytic tyrosine of the enzyme, resulting in the formation of a DNA-(5'-phosphotyrosyl)-enzyme intermediate and the expulsion of a 3'-OH DNA strand. The free DNA strand then undergoes passage around the unbroken strand, thus removing DNA supercoils. Finally, in the religation step, the DNA 3'-OH attacks the covalent intermediate to expel the active-site tyrosine and restore the DNA phosphodiester backbone. The sequence is that of DNA topoisomerase 3 from Bacillus cereus (strain ATCC 10987 / NRS 248).